The following is a 370-amino-acid chain: 3 beta-hydroxysteroid dehydrogenase/Delta 5--&gt;4-isomerase (370 aa).

The active-site Proton acceptor is the Tyr-158. Lys-162 is a binding site for NAD(+).

Belongs to the 3-beta-HSD family. As to quaternary structure, monomer.

Its subcellular location is the cytoplasm. The enzyme catalyses a 3beta-hydroxy-Delta(5)-steroid + NAD(+) = a 3-oxo-Delta(5)-steroid + NADH + H(+). It carries out the reaction cholesterol + NAD(+) = cholest-5-en-3-one + NADH + H(+). It catalyses the reaction pregnenolone + NAD(+) = pregn-5-ene-3,20-dione + NADH + H(+). The catalysed reaction is 3beta-hydroxyandrost-5-en-17-one + NAD(+) = androst-5-ene-3,17-dione + NADH + H(+). The enzyme catalyses a 3-oxo-Delta(5)-steroid = a 3-oxo-Delta(4)-steroid. It carries out the reaction cholest-5-en-3-one = cholest-4-en-3-one. It catalyses the reaction pregn-5-ene-3,20-dione = progesterone. The catalysed reaction is androst-5-ene-3,17-dione = androst-4-ene-3,17-dione. It functions in the pathway lipid metabolism; steroid biosynthesis. 3-beta-HSD is a bifunctional enzyme, that catalyzes the oxidation and isomerization of cholesterol, pregnenolone, and dehydroepiandrosterone (DHEA) into cholest-4-en-3-one, progesterone, and androsterone, respectively. The polypeptide is 3 beta-hydroxysteroid dehydrogenase/Delta 5--&gt;4-isomerase (Mycobacterium tuberculosis (strain CDC 1551 / Oshkosh)).